The following is a 351-amino-acid chain: Nicotinate-nucleotide--dimethylbenzimidazole phosphoribosyltransferase (351 aa).

E317 acts as the Proton acceptor in catalysis.

The protein belongs to the CobT family.

It carries out the reaction 5,6-dimethylbenzimidazole + nicotinate beta-D-ribonucleotide = alpha-ribazole 5'-phosphate + nicotinate + H(+). The protein operates within nucleoside biosynthesis; alpha-ribazole biosynthesis; alpha-ribazole from 5,6-dimethylbenzimidazole: step 1/2. Catalyzes the synthesis of alpha-ribazole-5'-phosphate from nicotinate mononucleotide (NAMN) and 5,6-dimethylbenzimidazole (DMB). The polypeptide is Nicotinate-nucleotide--dimethylbenzimidazole phosphoribosyltransferase (Pseudomonas putida (strain ATCC 700007 / DSM 6899 / JCM 31910 / BCRC 17059 / LMG 24140 / F1)).